Consider the following 159-residue polypeptide: Phosphopantetheine adenylyltransferase (159 aa).

Substrate is bound at residue T10. ATP contacts are provided by residues 10 to 11 (TF) and H18. Positions 42, 74, and 88 each coordinate substrate. ATP contacts are provided by residues 89–91 (GLR), E99, and 124–130 (WSFISSS).

It belongs to the bacterial CoaD family. Homohexamer. Mg(2+) is required as a cofactor.

The protein resides in the cytoplasm. It catalyses the reaction (R)-4'-phosphopantetheine + ATP + H(+) = 3'-dephospho-CoA + diphosphate. Its pathway is cofactor biosynthesis; coenzyme A biosynthesis; CoA from (R)-pantothenate: step 4/5. Reversibly transfers an adenylyl group from ATP to 4'-phosphopantetheine, yielding dephospho-CoA (dPCoA) and pyrophosphate. The polypeptide is Phosphopantetheine adenylyltransferase (Yersinia pestis).